The chain runs to 515 residues: MKKLQASVRSHKKQPANHKRRRTRALSSSQAKPSSLDGLAKQKREELLQASVSPYHLFSDVADVTAFRSNLLSWYDQEKRDLPWRNLAKEEANSDRRAYAVWVSEVMLQQTQVATVIDYYTRWMQKWPKLQDLASASLEEVNQLWSGLGYYSRGRRLQEGARKVVEELGGHMPRTAETLQQLLPGVGRYTAGAIASIAFDQVTGVVDGNVLRVLCRVRAIGADPTSTLVSHHLWNLAQQLVDPARPGDFNQAAMELGATVCTPQRPLCSHCPVQSLCRAYQRVQRGQLSALPGRPDIEECALNTRQCQLCLTSSSPWDPSMGVANFPRKASRRPPREEYSATCVVEQPGAIGGPLVLLVQRPDSGLLAGLWEFPSVTLEPSEQHQHKALLQELQRWCGPLPAIRLQHLGEVIHIFSHIKLTYQVYSLALDQAPASTAPPGARWLTWEEFCNAAVSTAMKKVFRMYEDHRQGTRKGSKRSQVCPPSSRKKPSLGQQVLDTFFQRHIPTDKPNSTTQ.

Over residues 1–24 (MKKLQASVRSHKKQPANHKRRRTR) the composition is skewed to basic residues. Residues 1–38 (MKKLQASVRSHKKQPANHKRRRTRALSSSQAKPSSLDG) form a disordered region. E105 (proton donor/acceptor) is an active-site residue. C261, C268, C271, and C277 together coordinate [4Fe-4S] cluster. A Nudix hydrolase domain is found at 335–466 (PREEYSATCV…AMKKVFRMYE (132 aa)). The short motif at 376–398 (VTLEPSEQHQHKALLQELQRWCG) is the Nudix box element. The tract at residues 468–494 (HRQGTRKGSKRSQVCPPSSRKKPSLGQ) is disordered.

The protein belongs to the Nth/MutY family. It depends on [4Fe-4S] cluster as a cofactor. As to expression, expressed in heart, lung, liver, intestine, brain and thymus.

It localises to the nucleus. It is found in the mitochondrion. The catalysed reaction is Hydrolyzes free adenine bases from 7,8-dihydro-8-oxoguanine:adenine mismatched double-stranded DNA, leaving an apurinic site.. Its function is as follows. Involved in oxidative DNA damage repair. Initiates repair of A*oxoG to C*G by removing the inappropriately paired adenine base from the DNA backbone. Possesses both adenine and 2-OH-A DNA glycosylase activities. In Mus musculus (Mouse), this protein is Adenine DNA glycosylase (Mutyh).